We begin with the raw amino-acid sequence, 124 residues long: UPF0102 protein Rcas_2007 (124 aa).

The protein belongs to the UPF0102 family.

The sequence is that of UPF0102 protein Rcas_2007 from Roseiflexus castenholzii (strain DSM 13941 / HLO8).